The sequence spans 154 residues: UPF0756 membrane protein BPUM_2558 (154 aa).

4 consecutive transmembrane segments (helical) span residues 8 to 28 (FLVL…ILAV), 54 to 74 (WGVT…DIGF), 87 to 107 (WIAL…IVLL), and 117 to 137 (LVFG…GPLI).

This sequence belongs to the UPF0756 family.

Its subcellular location is the cell membrane. The chain is UPF0756 membrane protein BPUM_2558 from Bacillus pumilus (strain SAFR-032).